The following is a 544-amino-acid chain: Probable protein kinase UbiB (544 aa).

Residues 123–501 (EFDIKPLASA…KRQQATGKFL (379 aa)) form the Protein kinase domain. ATP-binding positions include 129–137 (LASASIAQV) and lysine 152. Residue aspartate 287 is the Proton acceptor of the active site. Transmembrane regions (helical) follow at residues 496-516 (ATGK…AILV) and 519-539 (AYEQ…LLSW).

Belongs to the ABC1 family. UbiB subfamily.

It localises to the cell inner membrane. It participates in cofactor biosynthesis; ubiquinone biosynthesis [regulation]. Functionally, is probably a protein kinase regulator of UbiI activity which is involved in aerobic coenzyme Q (ubiquinone) biosynthesis. In Vibrio campbellii (strain ATCC BAA-1116), this protein is Probable protein kinase UbiB.